The sequence spans 520 residues: Putative lipase ATG15 (520 aa).

Residues 1–14 (MLHKSPSRKRFASP) lie on the Cytoplasmic side of the membrane. The helical; Signal-anchor for type II membrane protein transmembrane segment at 15–35 (LHLGCILTLTVLCLIAYYFAL) threads the bilayer. The Lumenal portion of the chain corresponds to 36-520 (PDYLSVGKSS…WLGFCTKYEL (485 aa)). Asparagine 173, asparagine 202, and asparagine 208 each carry an N-linked (GlcNAc...) asparagine glycan. Serine 332 serves as the catalytic Charge relay system.

Belongs to the AB hydrolase superfamily. Lipase family. As to quaternary structure, binds to both phosphatidylinositol (PI) and phosphatidylinositol 3,5-bisphosphate (PIP2).

The protein resides in the endosome. It is found in the multivesicular body membrane. It localises to the prevacuolar compartment membrane. The catalysed reaction is a triacylglycerol + H2O = a diacylglycerol + a fatty acid + H(+). Its function is as follows. Lipase which is essential for lysis of subvacuolar cytoplasm to vacuole targeted bodies and intravacuolar autophagic bodies. Involved in the lysis of intravacuolar multivesicular body (MVB) vesicles. The intravacuolar membrane disintegration by ATG15 is critical to life span extension. The sequence is that of Putative lipase ATG15 (ATG15) from Saccharomyces cerevisiae (strain YJM789) (Baker's yeast).